Consider the following 207-residue polypeptide: Ras-related protein Rab-2A (207 aa).

Glycine 12–cysteine 20 contacts GTP. Positions histidine 34–phenylalanine 42 match the Effector region motif. Residues aspartate 60–glutamine 64, asparagine 118–aspartate 121, and serine 148–lysine 150 contribute to the GTP site. The interval glycine 187–lysine 207 is disordered. 2 S-geranylgeranyl cysteine lipidation sites follow: cysteine 205 and cysteine 206.

The protein belongs to the small GTPase superfamily. Rab family.

The protein localises to the cell membrane. It catalyses the reaction GTP + H2O = GDP + phosphate + H(+). Regulated by guanine nucleotide exchange factors (GEFs) which promote the exchange of bound GDP for free GTP, GTPase activating proteins (GAPs) which increase the GTP hydrolysis activity, and GDP dissociation inhibitors which inhibit the dissociation of the nucleotide from the GTPase. The small GTPases Rab are key regulators of intracellular membrane trafficking, from the formation of transport vesicles to their fusion with membranes. Rabs cycle between active GTP-bound and inactive GDP-bound states. In their active state, drive transport of vesicular carriers from donor organelles to acceptor organelles to regulate the membrane traffic that maintains organelle identity and morphology. The sequence is that of Ras-related protein Rab-2A (rab2A) from Dictyostelium discoideum (Social amoeba).